The following is a 516-amino-acid chain: Delta(24)-sterol reductase (516 aa).

The N-terminal stretch at 1 to 22 is a signal peptide; the sequence is MEPAVSLAVCALLFLLWVRLKG. The Lumenal portion of the chain corresponds to 23–31; the sequence is LEFVLIHQR. The helical transmembrane segment at 32–52 threads the bilayer; sequence WVFVCLFLLPLSLIFDIYYYV. The Cytoplasmic portion of the chain corresponds to 53-516; that stretch reads RAWVVFKLSS…YDKICKAARH (464 aa). In terms of domain architecture, FAD-binding PCMH-type spans 58–234; it reads FKLSSAPRLH…VAAEIRIIPA (177 aa). Residue 163 to 175 coordinates FAD; it reads TVGGLIMGTGIES.

This sequence belongs to the FAD-binding oxidoreductase/transferase type 4 family. Interacts with DHCR7; this interaction regulates DHCR7 activity. FAD is required as a cofactor. Highly expressed in brain and adrenal gland with moderate expression in liver, lung, spleen, prostate and spinal cord. Low expression in heart, uterus and prostate. Undetectable in blood cells. In the brain, strongly expressed in cortical regions, substantia nigra, caudate nucleus, hippocampus, medulla oblongata and pons. In brains affected by Alzheimer disease, expression in the inferior temporal lobe is substantially lower than in the frontal cortex.

It is found in the endoplasmic reticulum membrane. The protein localises to the golgi apparatus membrane. The enzyme catalyses cholesterol + NADP(+) = desmosterol + NADPH + H(+). It carries out the reaction lanosterol + NADPH + H(+) = 24,25-dihydrolanosterol + NADP(+). The catalysed reaction is 5alpha-cholest-8-en-3beta-ol + NADP(+) = zymosterol + NADPH + H(+). It functions in the pathway steroid biosynthesis; cholesterol biosynthesis. Catalyzes the reduction of the delta-24 double bond of sterol intermediates during cholesterol biosynthesis. In addition to its cholesterol-synthesizing activity, can protect cells from oxidative stress by reducing caspase 3 activity during apoptosis induced by oxidative stress. Also protects against amyloid-beta peptide-induced apoptosis. The protein is Delta(24)-sterol reductase (DHCR24) of Homo sapiens (Human).